A 38-amino-acid polypeptide reads, in one-letter code: Photosystem II reaction center protein L (38 aa).

The chain crosses the membrane as a helical span at residues 17 to 37 (SLYWGLLCIFVLAILFSSYFF).

This sequence belongs to the PsbL family. PSII is composed of 1 copy each of membrane proteins PsbA, PsbB, PsbC, PsbD, PsbE, PsbF, PsbH, PsbI, PsbJ, PsbK, PsbL, PsbM, PsbT, PsbX, PsbY, PsbZ, Psb30/Ycf12, at least 3 peripheral proteins of the oxygen-evolving complex and a large number of cofactors. It forms dimeric complexes.

It is found in the plastid. The protein localises to the chloroplast thylakoid membrane. In terms of biological role, one of the components of the core complex of photosystem II (PSII). PSII is a light-driven water:plastoquinone oxidoreductase that uses light energy to abstract electrons from H(2)O, generating O(2) and a proton gradient subsequently used for ATP formation. It consists of a core antenna complex that captures photons, and an electron transfer chain that converts photonic excitation into a charge separation. This subunit is found at the monomer-monomer interface and is required for correct PSII assembly and/or dimerization. This is Photosystem II reaction center protein L from Cyanidioschyzon merolae (strain NIES-3377 / 10D) (Unicellular red alga).